Consider the following 302-residue polypeptide: Heme A synthase (302 aa).

Topologically, residues 1 to 8 (MFRKQNLK) are cytoplasmic. A helical membrane pass occupies residues 9–29 (WLGVLATIIMTFVQLGGALVT). Residues 30–67 (KTGSEDGCGSSWPLCNGALLPENLPIQTIIELSHRAVS) lie on the Extracellular side of the membrane. Cysteine 37 and cysteine 44 are disulfide-bonded. The active site involves glutamate 60. Histidine 63 is a binding site for heme o. A helical transmembrane segment spans residues 68–88 (AISLIVVLWLVITAWKNIGYI). Residues 89 to 93 (KEIKP) lie on the Cytoplasmic side of the membrane. Residues 94 to 114 (LSIISVGFLLVQALVGAAAVI) traverse the membrane as a helical segment. The Extracellular portion of the chain corresponds to 115-125 (WQQNPYVLALH). Heme o is bound at residue histidine 125. Residues 126-146 (FGISLISFSSVFLMTLIIFSI) traverse the membrane as a helical segment. Topologically, residues 147–161 (DKKYEADILFIHKPL) are cytoplasmic. The chain crosses the membrane as a helical span at residues 162–182 (RILTWLMAIIVYLTIYTGALV). The Extracellular segment spans residues 183–215 (RHTKSSLAYGAWPIPFDDIVPHNAHDWVQFSHR). Heme b is bound at residue histidine 214. The helical transmembrane segment at 216–236 (GMAFITFIWIMITFIHAIKNY) threads the bilayer. Residues 237 to 244 (SDNRTVRY) are Cytoplasmic-facing. Residues 245 to 265 (GYTASFILVILQVITGALSVI) traverse the membrane as a helical segment. Over 266–270 (TNVNL) the chain is Extracellular. A helical membrane pass occupies residues 271–291 (IIALFHALFITYLFGMIAYFI). Heme b is bound at residue histidine 276. At 292-302 (LLMLRTTRSLK) the chain is on the cytoplasmic side.

Belongs to the COX15/CtaA family. Type 1 subfamily. As to quaternary structure, interacts with CtaB. Heme b is required as a cofactor.

The protein localises to the cell membrane. It carries out the reaction Fe(II)-heme o + 2 A + H2O = Fe(II)-heme a + 2 AH2. It functions in the pathway porphyrin-containing compound metabolism; heme A biosynthesis; heme A from heme O: step 1/1. Catalyzes the conversion of heme O to heme A by two successive hydroxylations of the methyl group at C8. The first hydroxylation forms heme I, the second hydroxylation results in an unstable dihydroxymethyl group, which spontaneously dehydrates, resulting in the formyl group of heme A. The protein is Heme A synthase of Staphylococcus epidermidis (strain ATCC 12228 / FDA PCI 1200).